Reading from the N-terminus, the 49-residue chain is Large ribosomal subunit protein eL40 (49 aa).

The protein belongs to the eukaryotic ribosomal protein eL40 family.

This Halorubrum lacusprofundi (strain ATCC 49239 / DSM 5036 / JCM 8891 / ACAM 34) protein is Large ribosomal subunit protein eL40.